We begin with the raw amino-acid sequence, 126 residues long: Glycine cleavage system H protein (126 aa).

In terms of domain architecture, Lipoyl-binding spans 23–104 (TLTVGITDHA…PYESWLFKIK (82 aa)). Lys64 carries the N6-lipoyllysine modification.

The protein belongs to the GcvH family. The glycine cleavage system is composed of four proteins: P, T, L and H. It depends on (R)-lipoate as a cofactor.

In terms of biological role, the glycine cleavage system catalyzes the degradation of glycine. The H protein shuttles the methylamine group of glycine from the P protein to the T protein. In Paraburkholderia phytofirmans (strain DSM 17436 / LMG 22146 / PsJN) (Burkholderia phytofirmans), this protein is Glycine cleavage system H protein.